The sequence spans 3165 residues: MYKEAERPIEVWRTQVMDGPTWTALSESCRDRLFFASGEGGEHMTLDIIQPDSYTKIRLFRSGRFEVSVDGKSFGQGGNRYRFVFRYDSLLSTPFGYPAEDKEIALQDYNHKQLLGEMFLKLPDSYVDGRPIAEAFFRYVDDLKWDVGVFRDRRSLTELHLPASSGLTTAQVSVAKLEWPPLPIIQAQPTILAGIIDNFKICFPVNGKWIYGQGLSWTRYDGDASVPTSLLSNRQHARFWNEKDIPTGLKLSKEGFIKLWAQKSRKWQDHMARSIGLSHEAAVELVRATRVNEAKPHLVPMEEAKEAPRQQLVPRRSTFVDNHEEEVEIDTLRVPVEEGRCFELLFNNQVTPAIFDKKPLLKDVLGVFEENVCTMDSLEISHSDQCVHIVAGETFRNYDEIKAVLEVILENEPDILVGAEEGSVADYVKAGKHFLFENHQWVRNGLKLAKGLAEPGQRAKDNTNPSTPRPIEDADYIHPFDNGQPLPGRSDQWVSGFEVTRLRHHDEMPHIRSVRNTGIHGLPGDFLSNYPRLPTPVFHRLRDLWDDVIGILMKLEFGDNCSPVLNVTANADWVRSETTINFISDQPGKAQSRPREDGGFDILVPCRGIATRSIRLLPLFIRLPNRFRAVALLNGRQSDYDNYGWPVFNPVIPLPQMDSFYVEAVAAGRSMYPPGFLLGRYDALEYLVHTATVYGAEEAFLLPFTHHVRVYPPPRPGREIPFGSWCKNYKFEAERFWYDADWKLRVHETNHDFDRLIEITKTCRRNPPEENLQAKLEDTARKVCSVWQYNIMIASSVAFLVPLYFTLYVPYLQFYLHVDPGDYILLPPVLWLVWTNLCYGYACDAWCRLFFFVEEAGKKELVHSSEEFSSDPSSTLLIPTMGTRGDHVPPRFFANMAVLAGVKTHLLKLQTATYGDLENLKKGKLGSLLPGYLQNHYSVLRGYKAAFTPHVELDMPNATSYNLAPPRSYINKIRYLTDENRSGASMIDRAVTWFAEELADTFWPDWQIGCLRGCNLPRSADGVSLITKQPNLKTGKIGWLHGSADPAVVPKDIRDKYPLVPNGDHNEIFRHYDKIYMPGGAGAVQTAIACGCEVVVTDVNLDRDYHTMPTQKDFHQPSILPYFAWLWRQGFDVKLPRVLLVIGWLKFHYSIRYKHLEFAADFVIRAGLFWWYGCLHLLPFMAAAIMAPRFVKKYLVGMAWLTEPGLLMLKALWRFPIFMVTPRWMLPFIVTVSVYNWWWPLSQDGLNYASKRFELIFEPVTRGKHTFSYPFGHWCLRDTNSMIVYEGKFVNPSETSIGSPFKLSKSVRPVRPGAVFHLVPFHVQKLLDSMDEAPLPYSANHNCTTVILKGIMYRSALGFVFAYMVSWAVYLVLRPPQAAATVYHWVYPERSWDTSRLYHLLLGFAAGGTVPMEVIDEEHVEEKPSVAGQSEPAAEIDNDKISDYDQEWWGSQDSIDTVVNDLCYLLSFLKDTAIPEEVKLDVVELAYTQLVQDEKERIPEPKGTKILDMPNWKPGNWAKLIDETHRVLSQFTQYTPRVLNELVVWLKGLGENLYRVAEPILMLLVRAMRAAKSVSDRATRSVYHCLCHWLDVMYGGSAPTRVKTVWGLTGLVASGMTSQKAILAQNIAMMEYQGRGNFLDDYDNFVSNIKEPGKGLPGINTIGGPQRRPIRYKNPVMSHQAAEICGLKPGEYEVDDRYQERINDYLAEGIPQAVDGVLFGDRNPDRIARSISRYEPEYSGCSPEDKALVEDTARAMFEQWPEVFADRDIMLPKGVELYIKEKYSAGTPFISSFYKSRKALKQAGVMDVIRKNALECISTGKYPTQFYHAFAKSQAVPGQPLLAPRMKDLRTVVSEDLSAYMVDQIFQIEANKRITWETYGAGSGMPLSQSMARIWDELHDLRKREGGQFIIADATAYDSNCKPALFHGAGKLVELGFQNHPSGKGRQFAQVVQCKFEAMQNAWVMGITEPSYTALTFHVPDVAVRHELESKYPAHFATFSELLAHNNVNVTEWKRLSWEERKACARDMQAVPGKVFLTNDPALRLQGSSWQGSFTTEPKRDEFRKYQTYFYDSKAAMREDIKRIVFANREVISNVHHKNRGGGTGQSATSWDNTATFKLGVISAWARATGKPPKDFFCSNRLYNTSDDTVWWSKDLLSSAEVDRFKQAAADFGILLEIGSTKKITEVEYLSKLPRRPTAEDSADYRAWRQGRIENMRSSGRFSEEQLLSIEREQLPQFLMVQNPTAILMRRTAFRYYQSSPSKFLYTSCERGAGHALVTAFQPALYKRFAIEYAEDLNRLCKEHHINQRYELVSQQDRMKMQVINVNPNWKRNFKLSPRQEAFLRWIRQAKFPSYRQVLDIHLRIRDPDPSAHDRFIAKLDRAWRNPDEGIRDIVDGVYRYTDMIPEEFKRFMPSTDMLYAENPWHTHNQYVEKFIYLKLLETTTVDELTFAQFDAVAKESPYGICMNTIKFWEDLRDPDYLKDLLASEAMIDKVRIYQGMTVIISAMYFAMHWVELFIQSLFLIGPLYNLFMWSFWGLSKVYGLANTFYWHGKARSSREISSILPRDPYMWSKRFVSTMADFIPERFALGIVPVTLVLDGLAEIIEVLFGRMWRLFANLKSVGTDFSDARSGKSLNVPSNPWAAYAHTYATKAIEHGHVTVAAKTASGKSTFFPAAVWAERRNIGIKKLWIVMPRKILRDNWEIPFDIRSQIVKRGKTLDPSADIYVTTYGHFRTRIGGLVPRDNLVFFDEFHEMDGFMLQDVEDWKGPTIFMSATPVALHGMAGIPFLEPTLPKRFNLTVYKVDSDDVLEMWNRARNQFADQPELLARPMIIVPTYNELKKTIAGLENLDRSITWHEVSSNSPLVPKTGGLVCTPYVQTGIDIKPAPSILIDSGRDVIVHKGRLVTPHPYTDEKTNEQRVNRVGRTMDGVVIQPQLAGTGNPPVKYPSGIFFSSELVAGQYKVPRLTKVNGCVHPELPYMSIKYTSELSDPAKAREEEQSVTKSLLFIHLMALAGVRQSEWALRYNRYFELHLPFGEDEDHLERILTSGKLRYANHIPVDMAMQLLGNGHVTWGIGGVPTITRPRYPCDGMWVEDPSSRKSYAHKVLLHQREHAEIGMWQAQVNELRAQNLALQSQLRSACTRRSTAGRILRHTRPPDIPVCG.

One can recognise a Peptidase C8 domain in the interval 271–418 (MARSIGLSHE…LENEPDILVG (148 aa)). Residues Cys-341 and His-388 each act as for papain-like protease p48 activity in the active site. Residues 453-472 (AEPGQRAKDNTNPSTPRPIE) are disordered. The next 6 membrane-spanning stretches (helical) occupy residues 791-811 (IMIASSVAFLVPLYFTLYVPY), 823-843 (YILLPPVLWLVWTNLCYGYAC), 1166-1186 (AGLFWWYGCLHLLPFMAAAIM), 1193-1213 (KYLVGMAWLTEPGLLMLKALW), 1215-1235 (FPIFMVTPRWMLPFIVTVSVY), and 1356-1376 (ALGFVFAYMVSWAVYLVLRPP). Residues 1793 to 2208 (FYKSRKALKQ…AEDSADYRAW (416 aa)) are RNA-directed RNA polymerase. 3 consecutive transmembrane segments (helical) span residues 2495 to 2515 (VRIYQGMTVIISAMYFAMHWV), 2517 to 2537 (LFIQSLFLIGPLYNLFMWSFW), and 2590 to 2610 (LGIVPVTLVLDGLAEIIEVLF). The region spanning 2651-2796 (ATKAIEHGHV…IPFLEPTLPK (146 aa)) is the Helicase ATP-binding domain. 2664–2671 (AKTASGKS) serves as a coordination point for ATP. The DEFH box signature appears at 2751–2754 (DEFH).

It in the C-terminal section; belongs to the DEAD box helicase family. In terms of processing, papain-like protease p48 is autocatalytically processed. The putative RNA-directed RNA polymerase/helicase may be further processed.

The protein localises to the host membrane. It catalyses the reaction RNA(n) + a ribonucleoside 5'-triphosphate = RNA(n+1) + diphosphate. It carries out the reaction ATP + H2O = ADP + phosphate + H(+). In terms of biological role, papain-like protease p48 is a cysteine protease of the peptidase family C8. This Cryphonectria hypovirus 1 (strain EP713) (CHV-1/EP713) protein is ORFB polyprotein.